The following is a 634-amino-acid chain: Transmembrane and coiled-coil domain-containing protein 4 (634 aa).

A coiled-coil region spans residues 150-190 (EELDVLEEMFLESLKEIKEEESEMAEASRKKKENRRKWKRY). 3 helical membrane-spanning segments follow: residues 203–223 (VIGVTGGLAAPLVAAGAATII), 231–251 (LGSAAGIAIMTSLFGAAGAGL), and 346–366 (LSGIVAALTWPASLLSVANVI). The interval 542-612 (EPRQAAAAAS…ERPPICSHGM (71 aa)) is disordered. Positions 552–583 (SGETPHQVGQTQGPISGDTSKLAMSTDPSQAQ) are enriched in polar residues.

It belongs to the TMCO4 family.

Its subcellular location is the membrane. The sequence is that of Transmembrane and coiled-coil domain-containing protein 4 (TMCO4) from Homo sapiens (Human).